Here is a 357-residue protein sequence, read N- to C-terminus: NADH-quinone oxidoreductase subunit H (357 aa).

8 consecutive transmembrane segments (helical) span residues 20-40, 92-112, 127-147, 165-185, 203-223, 259-279, 294-314, and 329-349; these read WLLV…MGCV, ALFV…WAVI, LLFV…AGWA, ISYE…SGSL, GLTF…IYII, FFLA…LMFL, IPGW…FIWF, and LGWK…AIWM.

It belongs to the complex I subunit 1 family. In terms of assembly, NDH-1 is composed of 14 different subunits. Subunits NuoA, H, J, K, L, M, N constitute the membrane sector of the complex.

The protein resides in the cell inner membrane. The enzyme catalyses a quinone + NADH + 5 H(+)(in) = a quinol + NAD(+) + 4 H(+)(out). Its function is as follows. NDH-1 shuttles electrons from NADH, via FMN and iron-sulfur (Fe-S) centers, to quinones in the respiratory chain. The immediate electron acceptor for the enzyme in this species is believed to be ubiquinone. Couples the redox reaction to proton translocation (for every two electrons transferred, four hydrogen ions are translocated across the cytoplasmic membrane), and thus conserves the redox energy in a proton gradient. This subunit may bind ubiquinone. The polypeptide is NADH-quinone oxidoreductase subunit H (Herminiimonas arsenicoxydans).